A 157-amino-acid chain; its full sequence is Ribosomal RNA large subunit methyltransferase H (157 aa).

Residues Leu-75, Gly-106, and Phe-125–Phe-130 each bind S-adenosyl-L-methionine.

The protein belongs to the RNA methyltransferase RlmH family. Homodimer.

The protein localises to the cytoplasm. It catalyses the reaction pseudouridine(1915) in 23S rRNA + S-adenosyl-L-methionine = N(3)-methylpseudouridine(1915) in 23S rRNA + S-adenosyl-L-homocysteine + H(+). In terms of biological role, specifically methylates the pseudouridine at position 1915 (m3Psi1915) in 23S rRNA. The protein is Ribosomal RNA large subunit methyltransferase H of Malacoplasma penetrans (strain HF-2) (Mycoplasma penetrans).